Here is a 767-residue protein sequence, read N- to C-terminus: Two-component response regulator-like PRR73 (767 aa).

The disordered stretch occupies residues 1–64 (MGSACEAGTD…EPQQTDEQKE (64 aa)). In terms of domain architecture, Response regulatory spans 82-200 (RVLLVENDDS…ELKNLWQHVW (119 aa)). Residues 205–214 (SSSGSGSESG) show a composition bias toward low complexity. Disordered regions lie at residues 205 to 272 (SSSG…QSSW), 312 to 388 (RWLP…NEPT), 476 to 546 (ASNQ…RGKV), 646 to 701 (ANYS…SGSG), and 727 to 767 (NFGK…DEDR). Positions 238–252 (DNEDDDDNDEDDDDL) are enriched in acidic residues. Polar residues-rich tracts occupy residues 263-272 (DNGSGTQSSW), 343-361 (RNSS…VNPT), and 488-497 (CSPQDNSSEA). The span at 518-531 (GSNGSSNNNDMGSS) shows a compositional bias: low complexity. Positions 532–543 (TKNAITKPSSNR) are enriched in polar residues. Positions 689–700 (GAGGGNGSGSGS) are enriched in gly residues. A CCT domain is found at 712–754 (REAALNKFRQKRKVRNFGKKVRYQSRKRLAEQRPRIRGQFVRQ). Over residues 727-738 (NFGKKVRYQSRK) the composition is skewed to basic residues.

Belongs to the ARR-like family.

Its subcellular location is the nucleus. Its function is as follows. Controls photoperiodic flowering response. Seems to be one of the component of the circadian clock. Expression of several members of the ARR-like family is controlled by circadian rhythm. The particular coordinated sequential expression of PRR73, PRR37, PRR95, PRR59 and PPR1 result to circadian waves that may be at the basis of the endogenous circadian clock. The sequence is that of Two-component response regulator-like PRR73 (PRR73) from Oryza sativa subsp. indica (Rice).